The primary structure comprises 396 residues: Elongation factor Tu (396 aa).

The tr-type G domain occupies 10-206; sequence KPHVNVGTIG…TMDSYIPEPV (197 aa). A G1 region spans residues 19-26; sequence GHVDHGKT. 19 to 26 provides a ligand contact to GTP; it reads GHVDHGKT. Residue threonine 26 participates in Mg(2+) binding. A G2 region spans residues 60–64; it reads GITIS. Residues 81 to 84 form a G3 region; the sequence is DCPG. GTP-binding positions include 81–85 and 136–139; these read DCPGH and NKAD. The interval 136–139 is G4; that stretch reads NKAD. The segment at 174 to 176 is G5; the sequence is SAL.

The protein belongs to the TRAFAC class translation factor GTPase superfamily. Classic translation factor GTPase family. EF-Tu/EF-1A subfamily. As to quaternary structure, monomer.

It localises to the cytoplasm. It carries out the reaction GTP + H2O = GDP + phosphate + H(+). In terms of biological role, GTP hydrolase that promotes the GTP-dependent binding of aminoacyl-tRNA to the A-site of ribosomes during protein biosynthesis. This is Elongation factor Tu from Legionella pneumophila (strain Paris).